Reading from the N-terminus, the 135-residue chain is MFLRTQARFFHATTKKMDFSKMSIVGRIGSEFTEHTSANNNRYLKYSIASQPRRDGQTNWYNITVFNEPQINFLTEYVRKGALVYVEADAANYVFERDDGSKGTTLSLVQKDINLLKNGKKLEDAEGQENAASSE.

Residues 1 to 17 (MFLRTQARFFHATTKKM) constitute a mitochondrion transit peptide. The SSB domain occupies 19-117 (FSKMSIVGRI…LVQKDINLLK (99 aa)).

As to quaternary structure, homotetramer. Interacts with PIF1.

The protein localises to the mitochondrion. In terms of biological role, this protein binds preferentially and cooperatively to single-stranded DNA (ssDNS). Involved in mitochondrial DNA replication. Stimulates PIF1 helicase activity. This is Single-stranded DNA-binding protein RIM1, mitochondrial (RIM1) from Saccharomyces cerevisiae (strain ATCC 204508 / S288c) (Baker's yeast).